The primary structure comprises 781 residues: Putative UPF0313 protein YPO0674/y3502/YP_2990 (781 aa).

The region spanning 368-646 is the Radical SAM core domain; it reads AYDMIRFSIN…KALLRYHDPA (279 aa). 3 residues coordinate [4Fe-4S] cluster: Cys382, Cys386, and Cys389. A disordered region spans residues 681–781; sequence REARRALRHH…AGSRGKNRQH (101 aa). Over residues 696-708 the composition is skewed to polar residues; it reads KHTSITRQRQPSN. Over residues 726–750 the composition is skewed to low complexity; the sequence is TSSAHSTSANQSTSANQSTSAAHST.

This sequence belongs to the UPF0313 family. It depends on [4Fe-4S] cluster as a cofactor.

In Yersinia pestis, this protein is Putative UPF0313 protein YPO0674/y3502/YP_2990.